The chain runs to 340 residues: HTH-type transcriptional regulator GalS (340 aa).

The 56-residue stretch at 1–56 (MITIRDVARQAGVSVATVSRVLNNSALVSPDTRDAVMQAVTLLGYRPNANAQALAT) folds into the HTH lacI-type domain. A DNA-binding region (H-T-H motif) is located at residues 4–23 (IRDVARQAGVSVATVSRVLN).

As to quaternary structure, homodimer.

Its function is as follows. Repressor of the mgl operon. Binds galactose and D-fucose as inducers. GalS binds to an operator DNA sequence within its own coding sequence. The protein is HTH-type transcriptional regulator GalS (galS) of Salmonella typhimurium (strain LT2 / SGSC1412 / ATCC 700720).